The primary structure comprises 284 residues: Tropomyosin Per a 7.0102 (284 aa).

The stretch at 1 to 266 (MDAIKKKMQA…EDELVHEKEK (266 aa)) forms a coiled coil.

Belongs to the tropomyosin family. Homodimer. Expressed in striated skeletal muscle (at protein level).

Its function is as follows. Tropomyosin, in association with the troponin complex, plays a central role in the calcium dependent regulation of muscle contraction. The sequence is that of Tropomyosin Per a 7.0102 from Periplaneta americana (American cockroach).